Reading from the N-terminus, the 43-residue chain is CLAVATA3/ESR (CLE)-related protein 16D10 (43 aa).

The first 30 residues, 1-30 (MFTNSIKNLIIYLMPLMVTLMLLSVSFVDA), serve as a signal peptide directing secretion. The CLE signature appears at 31–43 (GKKPSGPNPGGNN).

It belongs to the CLV3/ESR signal peptide family. As to expression, highly expressed exclusively within the subventral esophageal gland cell during syncytium formation in host plants.

It is found in the secreted. The protein resides in the host cytoplasm. It localises to the host extracellular space. Its function is as follows. Plays a role in the differentiation or division of feeding cells (syncytia) induced in plant roots during infection. Promotes host root growth. The chain is CLAVATA3/ESR (CLE)-related protein 16D10 (16D10) from Meloidogyne arenaria (Peanut root-knot nematode).